A 331-amino-acid chain; its full sequence is Probable cytosolic iron-sulfur protein assembly protein Ciao1 (331 aa).

WD repeat units follow at residues 12–51 (GHKG…WTTK), 57–96 (GHKR…ATLE), 97–136 (GHEN…EFEC), 142–181 (AHSQ…SDWD), 188–227 (SHTS…NEAG), 246–285 (LHTR…KRDA), and 297–331 (AHEQ…KLQE).

This sequence belongs to the WD repeat CIA1 family.

In terms of biological role, essential component of the cytosolic iron-sulfur (Fe/S) protein assembly machinery. Required for the maturation of extramitochondrial Fe/S proteins. The chain is Probable cytosolic iron-sulfur protein assembly protein Ciao1 from Drosophila mojavensis (Fruit fly).